The primary structure comprises 338 residues: Glycerol-3-phosphate dehydrogenase [NAD(P)+] (338 aa).

Residues serine 13, tryptophan 14, and lysine 108 each coordinate NADPH. Lysine 108, glycine 139, and serine 141 together coordinate sn-glycerol 3-phosphate. Alanine 143 provides a ligand contact to NADPH. Residues lysine 194, aspartate 247, serine 257, arginine 258, and asparagine 259 each coordinate sn-glycerol 3-phosphate. Residue lysine 194 is the Proton acceptor of the active site. Arginine 258 contacts NADPH. The NADPH site is built by valine 282 and glutamate 284.

Belongs to the NAD-dependent glycerol-3-phosphate dehydrogenase family.

Its subcellular location is the cytoplasm. It carries out the reaction sn-glycerol 3-phosphate + NAD(+) = dihydroxyacetone phosphate + NADH + H(+). The catalysed reaction is sn-glycerol 3-phosphate + NADP(+) = dihydroxyacetone phosphate + NADPH + H(+). The protein operates within membrane lipid metabolism; glycerophospholipid metabolism. Its function is as follows. Catalyzes the reduction of the glycolytic intermediate dihydroxyacetone phosphate (DHAP) to sn-glycerol 3-phosphate (G3P), the key precursor for phospholipid synthesis. The protein is Glycerol-3-phosphate dehydrogenase [NAD(P)+] of Streptococcus suis (strain 98HAH33).